A 91-amino-acid chain; its full sequence is MVIVFVVSFLCIEEMRTLSISSRTFPRIEASIPFKADVISWMGIFLFWMSIVSHSGISICSCMGGVESLPFLISKERCNSTKKLNCRLVWP.

This is an uncharacterized protein from Archaeoglobus fulgidus (strain ATCC 49558 / DSM 4304 / JCM 9628 / NBRC 100126 / VC-16).